The primary structure comprises 725 residues: Phosphoribosylformylglycinamidine synthase subunit PurL (725 aa).

Residue histidine 34 is part of the active site. Tyrosine 37 lines the ATP pocket. Position 93 (glutamate 93) interacts with Mg(2+). Substrate is bound by residues 94-97 and arginine 116; that span reads SHNH. The active-site Proton acceptor is histidine 95. Mg(2+) is bound at residue aspartate 117. Residues 220-241 form a disordered region; the sequence is GASFASEDLSEDAETEDRPAVQ. Glutamine 241 is a binding site for substrate. Residue aspartate 269 coordinates Mg(2+). A substrate-binding site is contributed by 313 to 315; that stretch reads ESQ. 2 residues coordinate ATP: aspartate 489 and glycine 526. Mg(2+) is bound at residue asparagine 527. Serine 529 serves as a coordination point for substrate.

The protein belongs to the FGAMS family. As to quaternary structure, monomer. Part of the FGAM synthase complex composed of 1 PurL, 1 PurQ and 2 PurS subunits.

The protein localises to the cytoplasm. It catalyses the reaction N(2)-formyl-N(1)-(5-phospho-beta-D-ribosyl)glycinamide + L-glutamine + ATP + H2O = 2-formamido-N(1)-(5-O-phospho-beta-D-ribosyl)acetamidine + L-glutamate + ADP + phosphate + H(+). It participates in purine metabolism; IMP biosynthesis via de novo pathway; 5-amino-1-(5-phospho-D-ribosyl)imidazole from N(2)-formyl-N(1)-(5-phospho-D-ribosyl)glycinamide: step 1/2. Part of the phosphoribosylformylglycinamidine synthase complex involved in the purines biosynthetic pathway. Catalyzes the ATP-dependent conversion of formylglycinamide ribonucleotide (FGAR) and glutamine to yield formylglycinamidine ribonucleotide (FGAM) and glutamate. The FGAM synthase complex is composed of three subunits. PurQ produces an ammonia molecule by converting glutamine to glutamate. PurL transfers the ammonia molecule to FGAR to form FGAM in an ATP-dependent manner. PurS interacts with PurQ and PurL and is thought to assist in the transfer of the ammonia molecule from PurQ to PurL. This Haloquadratum walsbyi (strain DSM 16790 / HBSQ001) protein is Phosphoribosylformylglycinamidine synthase subunit PurL.